The chain runs to 358 residues: Popeye domain-containing protein 1 (358 aa).

Residues 1-48 lie on the Extracellular side of the membrane; the sequence is MNSTESIPLAQSTVAGFTSELESLTPVPSNETTCENWREIHHLVFHVA. N-linked (GlcNAc...) asparagine glycans are attached at residues N2 and N30. The chain crosses the membrane as a helical span at residues 49-69; sequence NVCFAVGLLIPTTLHLHMILL. Position 70 (R70) is a topological domain, cytoplasmic. A helical transmembrane segment spans residues 71 to 91; the sequence is VMLSLGCTLYVVWATLYRCAL. D92 is a topological domain (extracellular). Residues 93–113 traverse the membrane as a helical segment; sequence VMIWNSVFLGINILHLSYLLY. Residues 93 to 115 form a required for interaction with CAV3 region; it reads VMIWNSVFLGINILHLSYLLYKK. Over 114-358 the chain is Cytoplasmic; that stretch reads KKRPVKIEKE…PDALKVHQLP (245 aa). Positions 136 to 186 are required for interaction with KCNK2; sequence RVPPDLFRRLTGQFCMIQTLKRGQVYATEDKTSVDDRLSILLKGRMKVSYR. 2 positions are modified to phosphoserine: S295 and S318. The span at 313 to 323 shows a compositional bias: low complexity; sequence SSSTASLPMSS. The disordered stretch occupies residues 313 to 350; sequence SSSTASLPMSSPQQRASAKMKPIEEGVEDDDEVFVSPD.

This sequence belongs to the popeye family. As to quaternary structure, homodimer. Homodimerization requires the C-terminus cytoplasmic region. Interacts (via the C-terminus cytoplasmic tail) with TJP1. Interacts (via the C-terminus cytoplasmic tail) with ARHGEF25/GEFT (via the DH domain). Interacts (via the C-terminus cytoplasmic tail) with VAMP3. Interacts with KCNK2; the interaction enhances KCNK2 surface expression and is inhibited by cAMP. Interacts with CAV3. As to expression, expressed in epithelial cells, skeletal muscle, heart and intestinal smooth muscle (at protein level). Expressed in fetal and adult heart and skeletal muscle.

It localises to the lateral cell membrane. The protein resides in the cell junction. It is found in the tight junction. The protein localises to the membrane. Its subcellular location is the cell membrane. It localises to the sarcolemma. The protein resides in the caveola. Functionally, cell adhesion molecule involved in the establishment and/or maintenance of cell integrity. Involved in the formation and regulation of the tight junction (TJ) paracellular permeability barrier in epithelial cells. Plays a role in VAMP3-mediated vesicular transport and recycling of different receptor molecules through its interaction with VAMP3. Plays a role in the regulation of cell shape and movement by modulating the Rho-family GTPase activity through its interaction with ARHGEF25/GEFT. Induces primordial adhesive contact and aggregation of epithelial cells in a Ca(2+)-independent manner. Also involved in striated muscle regeneration and repair and in the regulation of cell spreading. Important for the maintenance of cardiac function. Plays a regulatory function in heart rate dynamics mediated, at least in part, through cAMP-binding and, probably, by increasing cell surface expression of the potassium channel KCNK2 and enhancing current density. Is a caveolae-associated protein important for the preservation of caveolae structural and functional integrity as well as for heart protection against ischemia injury. This is Popeye domain-containing protein 1 from Mus musculus (Mouse).